The sequence spans 150 residues: Placenta-specific protein 4 (150 aa).

In terms of tissue distribution, expressed in placental syncytiotrophoblast and choriocarcinoma cells.

This chain is Placenta-specific protein 4 (PLAC4), found in Homo sapiens (Human).